The following is a 515-amino-acid chain: 1-pyrroline-5-carboxylate dehydrogenase (515 aa).

Residues E286 and C320 contribute to the active site.

The protein belongs to the aldehyde dehydrogenase family. RocA subfamily.

It catalyses the reaction L-glutamate 5-semialdehyde + NAD(+) + H2O = L-glutamate + NADH + 2 H(+). Its pathway is amino-acid degradation; L-proline degradation into L-glutamate; L-glutamate from L-proline: step 2/2. This is 1-pyrroline-5-carboxylate dehydrogenase from Geobacillus thermodenitrificans (strain NG80-2).